The following is a 278-amino-acid chain: Non-heme chloroperoxidase (278 aa).

The AB hydrolase-1 domain occupies 24-259 (PIVFHHGWPL…LKTYPGYSHG (236 aa)). Active-site residues include S97, D229, and H258.

This sequence belongs to the AB hydrolase superfamily. Bacterial non-heme haloperoxidase / perhydrolase family. In terms of assembly, homodimer.

Chlorinates and brominates suitable organic compounds. Involved in the biosynthesis of the antibiotic pyrrolnitrin. The polypeptide is Non-heme chloroperoxidase (cpo) (Burkholderia pyrrocinia (Pseudomonas pyrrocinia)).